Reading from the N-terminus, the 363-residue chain is MAHVLQKPKHSGTHSIVQEFQVPDYVPWQQSKQETKPSTLPPVQQANSLHTSKMKTLTRVQPVFHFKPTTVVTSCQPKNPRELHRRRKLDPGKMHAKIWLMKTSLRSGRAALRELRSRENFLSKLNRELIETIQEMENSTTLHVRALLQQQDTLATIIDILEYSNKKRLQQLKSELQEWEEKKKCKMSYLEQQAEQLNAKIEKTQEEVNFLSTYMDHEYSIKSVQISTLMRQLQQVKDSQQDELDDLGEMRRKVLESLSDKIQKKKKKILSSVVAETQRPYEEALLQKMWESQDFLKCMQRFREIIDQFEENMPVLRAEVEELQAQTREPREVIFEDVLLRRPKCTPDMDVILNIPVEEPLPF.

The stretch at 109 to 329 (RAALRELRSR…VEELQAQTRE (221 aa)) forms a coiled coil.

This is an uncharacterized protein from Homo sapiens (Human).